Reading from the N-terminus, the 357-residue chain is NADH-quinone oxidoreductase subunit H (357 aa).

Transmembrane regions (helical) follow at residues Trp20–Val40, Ile92–Val112, Leu127–Ala147, Val165–Leu185, Phe206–Val226, Met254–Ala274, Ile294–Phe314, and Leu329–Met349.

This sequence belongs to the complex I subunit 1 family. NDH-1 is composed of 14 different subunits. Subunits NuoA, H, J, K, L, M, N constitute the membrane sector of the complex.

Its subcellular location is the cell inner membrane. The enzyme catalyses a quinone + NADH + 5 H(+)(in) = a quinol + NAD(+) + 4 H(+)(out). In terms of biological role, NDH-1 shuttles electrons from NADH, via FMN and iron-sulfur (Fe-S) centers, to quinones in the respiratory chain. The immediate electron acceptor for the enzyme in this species is believed to be ubiquinone. Couples the redox reaction to proton translocation (for every two electrons transferred, four hydrogen ions are translocated across the cytoplasmic membrane), and thus conserves the redox energy in a proton gradient. This subunit may bind ubiquinone. This is NADH-quinone oxidoreductase subunit H from Bordetella petrii (strain ATCC BAA-461 / DSM 12804 / CCUG 43448).